The chain runs to 354 residues: MKKIVLTGGGTAGHVTPNIALLPSLKEAGYEVFYIGSYTGIEKTLIEDLGIPYYGISSGKLRRYRSLKNLSDPFRVLHGLFQAKRLMKKIKPDIVFSKGGFVSVPVVLAAGSRHIPVIIHESDMTPGLANKIAMRKATKICCNFPETLKYLPEGKAVLTGSPIRQELLLGNKAAGLDLCNFTTDKPIILVVGGSTGAVHVNDAVRSILPELLKDFQVVHLCGKGKMDDSLNGTPGYVQFEYISEQMRDLFAISSIVISRAGANAICELLALKKPNLLIPLSANASRGDQILNANSFKEHGYSMVLTEEDMNKDTLLAAVRKLYADRHQYIINMEKSEQQDSIDKIMNLIKDNSK.

UDP-N-acetyl-alpha-D-glucosamine is bound by residues 11-13 (TAG), Arg164, Ser194, and Gln289.

Belongs to the glycosyltransferase 28 family. MurG subfamily.

The protein resides in the cell membrane. The enzyme catalyses di-trans,octa-cis-undecaprenyl diphospho-N-acetyl-alpha-D-muramoyl-L-alanyl-D-glutamyl-meso-2,6-diaminopimeloyl-D-alanyl-D-alanine + UDP-N-acetyl-alpha-D-glucosamine = di-trans,octa-cis-undecaprenyl diphospho-[N-acetyl-alpha-D-glucosaminyl-(1-&gt;4)]-N-acetyl-alpha-D-muramoyl-L-alanyl-D-glutamyl-meso-2,6-diaminopimeloyl-D-alanyl-D-alanine + UDP + H(+). It participates in cell wall biogenesis; peptidoglycan biosynthesis. Cell wall formation. Catalyzes the transfer of a GlcNAc subunit on undecaprenyl-pyrophosphoryl-MurNAc-pentapeptide (lipid intermediate I) to form undecaprenyl-pyrophosphoryl-MurNAc-(pentapeptide)GlcNAc (lipid intermediate II). The protein is UDP-N-acetylglucosamine--N-acetylmuramyl-(pentapeptide) pyrophosphoryl-undecaprenol N-acetylglucosamine transferase of Lachnospira eligens (strain ATCC 27750 / DSM 3376 / VPI C15-48 / C15-B4) (Eubacterium eligens).